Here is a 205-residue protein sequence, read N- to C-terminus: Large ribosomal subunit protein uL4 (205 aa).

The interval Arg-43 to Asn-95 is disordered. A compositionally biased stretch (basic and acidic residues) spans Ala-48–His-57. Residues Ser-58–Gly-69 show a composition bias toward basic residues.

Belongs to the universal ribosomal protein uL4 family. In terms of assembly, part of the 50S ribosomal subunit.

Functionally, one of the primary rRNA binding proteins, this protein initially binds near the 5'-end of the 23S rRNA. It is important during the early stages of 50S assembly. It makes multiple contacts with different domains of the 23S rRNA in the assembled 50S subunit and ribosome. Forms part of the polypeptide exit tunnel. The protein is Large ribosomal subunit protein uL4 of Bordetella bronchiseptica (strain ATCC BAA-588 / NCTC 13252 / RB50) (Alcaligenes bronchisepticus).